A 339-amino-acid polypeptide reads, in one-letter code: MTDRSPFETDMLTLTRYVMEKGRQAKGTGELTQLLNSMLTAIKAISSAVRKAGLANLYGIAGSVNVTGDEVKKLDVLSNSLVINMLQSSYSTCVLVSEENKEAVITAKERRGKYVVCFDPLDGSSNIDCLASIGTIFAIYRKTTEDEPSEKDALQPGRNIVAAGYALYGSATLVALSTGQGVDLFMLDPALGEFVLVEKDIRIKKKGKIFSLNEGYAKYFDAATAEYVQKKKFPEDGSAPYGARYVGSMVADVHRTLVYGGIFMYPANQKSPNGKLRLLYECNPVAYIIEQAGGMATTGTQPVLDVKPESIHQRVPLILGSPEDVQEYLSCVQRNQAGR.

Positions aspartate 3–aspartate 10 are important for interaction with ALDOA. AMP is bound by residues valine 18 and threonine 28–threonine 32. Residues aspartate 69 and glutamate 98 each contribute to the Mg(2+) site. Position 113-114 (lysine 113–tyrosine 114) interacts with AMP. The Mg(2+) site is built by aspartate 119, leucine 121, and aspartate 122. Aspartate 122 contacts substrate. Residue arginine 141 participates in AMP binding. The Nuclear localization signal signature appears at lysine 204–lysine 208. Asparagine 213–tyrosine 216 contributes to the substrate binding site. 2 positions are modified to phosphotyrosine: tyrosine 216 and tyrosine 219. Substrate is bound by residues tyrosine 245–methionine 249, tyrosine 265, and lysine 275. Mg(2+) is bound at residue glutamate 281.

This sequence belongs to the FBPase class 1 family. Homotetramer. Interacts with ALDOA; the interaction blocks inhibition by physiological concentrations of AMP and reduces inhibition by Ca(2+). Interacts with alpha-actinin and F-actin. Requires Mg(2+) as cofactor.

Its subcellular location is the cell junction. It is found in the cytoplasm. The protein resides in the nucleus. It localises to the myofibril. The protein localises to the sarcomere. Its subcellular location is the z line. It carries out the reaction beta-D-fructose 1,6-bisphosphate + H2O = beta-D-fructose 6-phosphate + phosphate. It functions in the pathway carbohydrate biosynthesis; gluconeogenesis. Its activity is regulated as follows. Subject to complex allosteric regulation. The enzyme can assume an active R-state, or an inactive T-state. Intermediate conformations may exist. AMP acts as an allosteric inhibitor. Fructose 2,6-bisphosphate acts as a competitive inhibitor. Strongly inhibited by Ca(2+). In terms of biological role, catalyzes the hydrolysis of fructose 1,6-bisphosphate to fructose 6-phosphate in the presence of divalent cations and probably participates in glycogen synthesis from carbohydrate precursors, such as lactate. This chain is Fructose-1,6-bisphosphatase isozyme 2 (Fbp2), found in Rattus norvegicus (Rat).